Reading from the N-terminus, the 671-residue chain is UvrABC system protein B (671 aa).

Residues 25–412 (EGIDAGLAHQ…AGRVVEQVVR (388 aa)) form the Helicase ATP-binding domain. An ATP-binding site is contributed by 38–45 (GVTGSGKT). The Beta-hairpin motif lies at 91 to 114 (YYDYYQPEAYVPSSDTFIEKDASI). The region spanning 429–595 (QVDDLLSEIH…GVFKDVADIM (167 aa)) is the Helicase C-terminal domain. The segment at 600-624 (VPGSRSKKRKGMAKAAEENARYENE) is disordered. Over residues 614–624 (AAEENARYENE) the composition is skewed to basic and acidic residues. The region spanning 632–667 (NKRIRQLEEKMYQLARDLEFEAAAQMRDEIGKLRER) is the UVR domain.

This sequence belongs to the UvrB family. As to quaternary structure, forms a heterotetramer with UvrA during the search for lesions. Interacts with UvrC in an incision complex.

The protein localises to the cytoplasm. The UvrABC repair system catalyzes the recognition and processing of DNA lesions. A damage recognition complex composed of 2 UvrA and 2 UvrB subunits scans DNA for abnormalities. Upon binding of the UvrA(2)B(2) complex to a putative damaged site, the DNA wraps around one UvrB monomer. DNA wrap is dependent on ATP binding by UvrB and probably causes local melting of the DNA helix, facilitating insertion of UvrB beta-hairpin between the DNA strands. Then UvrB probes one DNA strand for the presence of a lesion. If a lesion is found the UvrA subunits dissociate and the UvrB-DNA preincision complex is formed. This complex is subsequently bound by UvrC and the second UvrB is released. If no lesion is found, the DNA wraps around the other UvrB subunit that will check the other stand for damage. The sequence is that of UvrABC system protein B from Pseudomonas savastanoi pv. phaseolicola (strain 1448A / Race 6) (Pseudomonas syringae pv. phaseolicola (strain 1448A / Race 6)).